The primary structure comprises 170 residues: MKKVIEFYLSGDRVYSTREKAINQLYNNRGYGELKGNKLFLSLIEAAYLVERGWIKVLDEDRELTFEEIFKLGKRKDEDFDIKYLVYKDLRDRGYIVKSALKFGSHFRVYRKNAEHSDWLIWVLRESEKLSPNDMTARVRVAHGVRKNMVMAIVDEDNDVVYYKIEWIKF.

Catalysis depends on residues tyrosine 110, histidine 116, and lysine 147.

It belongs to the tRNA-intron endonuclease family. Archaeal short subfamily. Homotetramer; although the tetramer contains four active sites, only two participate in the cleavage. Therefore, it should be considered as a dimer of dimers.

It catalyses the reaction pretRNA = a 3'-half-tRNA molecule with a 5'-OH end + a 5'-half-tRNA molecule with a 2',3'-cyclic phosphate end + an intron with a 2',3'-cyclic phosphate and a 5'-hydroxyl terminus.. In terms of biological role, endonuclease that removes tRNA introns. Cleaves pre-tRNA at the 5'- and 3'-splice sites to release the intron. The products are an intron and two tRNA half-molecules bearing 2',3' cyclic phosphate and 5'-OH termini. Recognizes a pseudosymmetric substrate in which 2 bulged loops of 3 bases are separated by a stem of 4 bp. The sequence is that of tRNA-splicing endonuclease from Pyrococcus abyssi (strain GE5 / Orsay).